A 178-amino-acid chain; its full sequence is ATP-dependent protease subunit HslV (178 aa).

T7 is an active-site residue. Positions 162, 165, and 168 each coordinate Na(+).

This sequence belongs to the peptidase T1B family. HslV subfamily. In terms of assembly, a double ring-shaped homohexamer of HslV is capped on each side by a ring-shaped HslU homohexamer. The assembly of the HslU/HslV complex is dependent on binding of ATP.

Its subcellular location is the cytoplasm. The enzyme catalyses ATP-dependent cleavage of peptide bonds with broad specificity.. Allosterically activated by HslU binding. Protease subunit of a proteasome-like degradation complex believed to be a general protein degrading machinery. In Burkholderia multivorans (strain ATCC 17616 / 249), this protein is ATP-dependent protease subunit HslV.